A 175-amino-acid chain; its full sequence is Large ribosomal subunit protein uL10 (175 aa).

The protein belongs to the universal ribosomal protein uL10 family. Part of the ribosomal stalk of the 50S ribosomal subunit. The N-terminus interacts with L11 and the large rRNA to form the base of the stalk. The C-terminus forms an elongated spine to which L12 dimers bind in a sequential fashion forming a multimeric L10(L12)X complex.

Its function is as follows. Forms part of the ribosomal stalk, playing a central role in the interaction of the ribosome with GTP-bound translation factors. In Prochlorococcus marinus (strain MIT 9215), this protein is Large ribosomal subunit protein uL10.